Here is a 291-residue protein sequence, read N- to C-terminus: ATP synthase gamma chain (291 aa).

Belongs to the ATPase gamma chain family. As to quaternary structure, F-type ATPases have 2 components, CF(1) - the catalytic core - and CF(0) - the membrane proton channel. CF(1) has five subunits: alpha(3), beta(3), gamma(1), delta(1), epsilon(1). CF(0) has three main subunits: a, b and c.

The protein localises to the cell membrane. Produces ATP from ADP in the presence of a proton gradient across the membrane. The gamma chain is believed to be important in regulating ATPase activity and the flow of protons through the CF(0) complex. The polypeptide is ATP synthase gamma chain (Streptococcus pyogenes serotype M1).